The sequence spans 261 residues: Rho-related GTP-binding protein RhoU (261 aa).

Residues 1–48 form a disordered region; it reads MAPQQGRPALPARCEPPAAPPVPPRRERGGRGARGPGVSGGRGRAGGA. Over residues 7–16 the composition is skewed to low complexity; that stretch reads RPALPARCEP. The span at 32-48 shows a compositional bias: gly residues; that stretch reads GARGPGVSGGRGRAGGA. GTP is bound by residues 59-66, 106-110, and 164-167; these read GDGAVGKT, DTAGQ, and TQSD. Glycyl lysine isopeptide (Lys-Gly) (interchain with G-Cter in ubiquitin) cross-links involve residues Lys-180 and Lys-251. A lipid anchor (S-palmitoyl cysteine) is attached at Cys-259.

This sequence belongs to the small GTPase superfamily. Rho family. As to quaternary structure, interacts with PAK1. Interacts with PAK3. Interacts with ARHGAP30 in a GTP-independent manner. In its GTP-loaded conformation, interacts with ARHGAP31. Interacts with PTK2B/PYK2. Interacts with PAK4; interaction protects RHOU from ubiquitination and subsequent degradation. It depends on Mg(2+) as a cofactor. In terms of processing, tyrosine phosphorylated by SRC in response to PTK2B/PYK2 activation. Ubiquitinated. 'Lys-48'-linked ubiquitination at Lys-180 and Lys-251 by the ECS(RAB40A) complex leading to its degradation.

Its subcellular location is the cell membrane. It is found in the golgi apparatus membrane. It localises to the cell junction. The protein localises to the focal adhesion. The protein resides in the cell projection. Its subcellular location is the podosome. Binds to and activates protein kinase PAK1. Plays a role in the regulation of cell morphology, cytoskeletal organization and focal adhesion assembly during cell migration. Also stimulates quiescent cells to reenter the cell cycle. Has no detectable GTPase activity but its high intrinsic guanine nucleotide exchange activity suggests it is constitutively GTP-bound. The chain is Rho-related GTP-binding protein RhoU from Mus musculus (Mouse).